We begin with the raw amino-acid sequence, 349 residues long: Leucine-rich repeat-containing protein 58 (349 aa).

LRR repeat units lie at residues 14-34 (NLTH…NKRK), 35-56 (DVQQ…VNSF), 58-80 (HLHL…LGLT), 81-102 (KLKT…KELG), 105-125 (RLEV…QFLQ), 128-149 (TLKS…IENL), 151-173 (SLEF…ANLP), 174-195 (YLSY…LAQV), 197-217 (SLRS…ILSL), and 219-239 (QLQE…RDLT).

In Xenopus tropicalis (Western clawed frog), this protein is Leucine-rich repeat-containing protein 58 (lrrc58).